Here is an 862-residue protein sequence, read N- to C-terminus: Taxadiene synthase (862 aa).

Asp-613, Asp-617, Asn-757, Thr-761, and Glu-765 together coordinate Mg(2+). The short motif at 613–617 is the DDXXD motif element; it reads DDMAD.

Belongs to the terpene synthase family. Requires Mg(2+) as cofactor.

The catalysed reaction is (2E,6E,10E)-geranylgeranyl diphosphate = taxa-4(5),11(12)-diene + diphosphate. Its pathway is alkaloid biosynthesis; taxol biosynthesis; taxa-4(20),11-dien-5alpha-ol from geranylgeranyl diphosphate: step 1/2. Its function is as follows. Catalyzes the cyclization of the ubiquitous isoprenoid intermediate geranylgeranyl diphosphate to taxa-4,11-diene, the parent olefin with a taxane skeleton. The chain is Taxadiene synthase (TDC1) from Taxus brevifolia (Pacific yew).